Reading from the N-terminus, the 379-residue chain is Flap endonuclease 1 (379 aa).

The segment at 1-105 (MGIKGLTKLL…QELAKRYSKR (105 aa)) is N-domain. A Mg(2+)-binding site is contributed by aspartate 34. Arginine 71 contacts DNA. Mg(2+) is bound by residues aspartate 87, glutamate 159, glutamate 161, aspartate 180, and aspartate 182. An I-domain region spans residues 123–254 (AIEKLSKRTV…QTALKLIRQH (132 aa)). Position 159 (glutamate 159) interacts with DNA. Residues glycine 232 and aspartate 234 each coordinate DNA. Aspartate 234 contributes to the Mg(2+) binding site. The tract at residues 331 to 379 (AKNKSSQGRLESFFKPTATTSAPLKRKETSDKTSKAAANKKTKAGGKKK) is disordered. An interaction with PCNA region spans residues 336 to 344 (SQGRLESFF). Residues 355–364 (KRKETSDKTS) are compositionally biased toward basic and acidic residues. Over residues 368 to 379 (ANKKTKAGGKKK) the composition is skewed to basic residues.

The protein belongs to the XPG/RAD2 endonuclease family. FEN1 subfamily. Interacts with PCNA. Three molecules of FEN1 bind to one PCNA trimer with each molecule binding to one PCNA monomer. PCNA stimulates the nuclease activity without altering cleavage specificity. Mg(2+) serves as cofactor. Post-translationally, phosphorylated. Phosphorylation upon DNA damage induces relocalization to the nuclear plasma.

Its subcellular location is the nucleus. It is found in the nucleolus. The protein resides in the nucleoplasm. The protein localises to the mitochondrion. In terms of biological role, structure-specific nuclease with 5'-flap endonuclease and 5'-3' exonuclease activities involved in DNA replication and repair. During DNA replication, cleaves the 5'-overhanging flap structure that is generated by displacement synthesis when DNA polymerase encounters the 5'-end of a downstream Okazaki fragment. It enters the flap from the 5'-end and then tracks to cleave the flap base, leaving a nick for ligation. Also involved in the long patch base excision repair (LP-BER) pathway, by cleaving within the apurinic/apyrimidinic (AP) site-terminated flap. Acts as a genome stabilization factor that prevents flaps from equilibrating into structures that lead to duplications and deletions. Also possesses 5'-3' exonuclease activity on nicked or gapped double-stranded DNA, and exhibits RNase H activity. Also involved in replication and repair of rDNA and in repairing mitochondrial DNA. The protein is Flap endonuclease 1 of Zea mays (Maize).